Reading from the N-terminus, the 134-residue chain is Gastrin-releasing peptide (134 aa).

The N-terminal stretch at 1–23 (MRSREVSLVLLALVLCPAPRGSA) is a signal peptide. Met-50 bears the Methionine amide mark. Positions 54–134 (SVAESPQLRE…QREGGNPQLY (81 aa)) are excised as a propeptide. The disordered stretch occupies residues 98–134 (PPRWEPLSIHQPAWDSKDVSNFKDSGSQREGGNPQLY). A compositionally biased stretch (polar residues) spans 119–134 (FKDSGSQREGGNPQLY).

The protein belongs to the bombesin/neuromedin-B/ranatensin family.

The protein resides in the secreted. The protein localises to the cytoplasmic vesicle. It localises to the secretory vesicle lumen. It is found in the cell projection. Its subcellular location is the neuron projection. Stimulates the release of gastrin and other gastrointestinal hormones. Contributes to the perception of prurient stimuli and to the transmission of itch signals in the spinal cord that promote scratching behavior. Contributes primarily to nonhistaminergic itch sensation. In one study, shown to act in the amygdala as part of an inhibitory network which inhibits memory specifically related to learned fear. In another study, shown to act on vasoactive intestinal peptide (VIP)-expressing cells in the auditory cortex, most likely via extrasynaptic diffusion from local and long-range sources, to mediate disinhibition of glutamatergic cells via VIP cell-specific GRPR signaling which leads to enhanced auditory fear memories. Contributes to the regulation of food intake. Inhibits voltage-gated sodium channels but enhances voltage-gated potassium channels in hippocampal neurons. Induces sighing by acting directly on the pre-Botzinger complex, a cluster of several thousand neurons in the ventrolateral medulla responsible for inspiration during respiratory activity. Functionally, induces an itch response through activation of receptors present on mast cells, triggering mast cell degranulation. The protein is Gastrin-releasing peptide (GRP) of Ovis aries (Sheep).